A 263-amino-acid polypeptide reads, in one-letter code: UPF0739 protein C1orf74 homolog (263 aa).

Belongs to the UPF0739 family.

The polypeptide is UPF0739 protein C1orf74 homolog (Rattus norvegicus (Rat)).